We begin with the raw amino-acid sequence, 304 residues long: Olfactory receptor 52A4 (304 aa).

The Extracellular portion of the chain corresponds to 1-32 (MALPITNGTLFMPFVLTFIGIPGFESVQCWIG). Asn-7 carries an N-linked (GlcNAc...) asparagine glycan. Residues 33–53 (IPFCATYVIALIGNSLLLIII) form a helical membrane-spanning segment. The Cytoplasmic portion of the chain corresponds to 54–61 (KSEPSLHE). A helical transmembrane segment spans residues 62 to 82 (PMYIFLATLGATDISLSTSIV). Topologically, residues 83–103 (PKMLDIFWFHLPEIYFDACLF) are extracellular. A disulfide bond links Cys-101 and Cys-184. A helical membrane pass occupies residues 104–124 (QMWLIHTFQGIESGVLLAMAL). The Cytoplasmic segment spans residues 125 to 146 (DRCVAICYPLRRAIVFTRQLVT). A helical transmembrane segment spans residues 147-167 (YIVVGVTLRPAILVIPCLLLI). Residues 168 to 203 (KCHLKLYRTKLIYHTYCERVALVKLATEDVYINKVY) are Extracellular-facing. The chain crosses the membrane as a helical span at residues 204 to 224 (GILGAFIVGGLDFIFITLSYI). The Cytoplasmic segment spans residues 225–255 (QIFITVFHLPLKEARLKVFNTCIPHIYVFFQ). The helical transmembrane segment at 256–276 (FYLLAFFFIFYSQIWILYPII) threads the bilayer. Topologically, residues 277 to 279 (CTY) are extracellular. A helical transmembrane segment spans residues 280-300 (HLVQSLPTGPTIPQPLYLWVK). The Cytoplasmic portion of the chain corresponds to 301–304 (DQTH).

Belongs to the G-protein coupled receptor 1 family.

It is found in the cell membrane. Functionally, odorant receptor. The polypeptide is Olfactory receptor 52A4 (Homo sapiens (Human)).